The primary structure comprises 454 residues: Probable ECA polymerase (454 aa).

11 consecutive transmembrane segments (helical) span residues 3–23, 39–59, 61–81, 119–139, 154–174, 180–200, 201–221, 222–242, 340–360, 377–397, and 409–429; these read LGQF…ILTL, FSML…MLVF, FGVA…ATAF, LALV…FLLF, GVAL…VYFL, AWFF…VIVG, GTRA…IVRG, WITL…MFWL, LVVM…GLII, YKAA…IVLA, and VFFC…YWLF.

The protein belongs to the WzyE family. As to quaternary structure, probably part of a complex composed of WzxE, WzyE and WzzE.

It is found in the cell inner membrane. It functions in the pathway bacterial outer membrane biogenesis; enterobacterial common antigen biosynthesis. In terms of biological role, probably involved in the polymerization of enterobacterial common antigen (ECA) trisaccharide repeat units. The sequence is that of Probable ECA polymerase from Yersinia pestis bv. Antiqua (strain Angola).